A 468-amino-acid polypeptide reads, in one-letter code: Chitoporin (468 aa).

A signal peptide spans Met1–Ala32.

It belongs to the outer membrane porin (Opr) (TC 1.B.25) family.

It localises to the cell outer membrane. Its function is as follows. Involved in the uptake of chitosugars. In Escherichia coli (strain K12), this protein is Chitoporin (chiP).